Here is a 274-residue protein sequence, read N- to C-terminus: Ribosomal RNA small subunit methyltransferase A (274 aa).

The S-adenosyl-L-methionine site is built by Asn28, Leu30, Gly55, Glu77, Asp103, and Asn122.

The protein belongs to the class I-like SAM-binding methyltransferase superfamily. rRNA adenine N(6)-methyltransferase family. RsmA subfamily.

It is found in the cytoplasm. It carries out the reaction adenosine(1518)/adenosine(1519) in 16S rRNA + 4 S-adenosyl-L-methionine = N(6)-dimethyladenosine(1518)/N(6)-dimethyladenosine(1519) in 16S rRNA + 4 S-adenosyl-L-homocysteine + 4 H(+). Its function is as follows. Specifically dimethylates two adjacent adenosines (A1518 and A1519) in the loop of a conserved hairpin near the 3'-end of 16S rRNA in the 30S particle. May play a critical role in biogenesis of 30S subunits. This chain is Ribosomal RNA small subunit methyltransferase A, found in Rhizobium meliloti (strain 1021) (Ensifer meliloti).